Consider the following 61-residue polypeptide: Small ribosomal subunit protein uS14 (61 aa).

4 residues coordinate Zn(2+): cysteine 24, cysteine 27, cysteine 40, and cysteine 43.

Belongs to the universal ribosomal protein uS14 family. Zinc-binding uS14 subfamily. In terms of assembly, part of the 30S ribosomal subunit. Contacts proteins S3 and S10. It depends on Zn(2+) as a cofactor.

Its function is as follows. Binds 16S rRNA, required for the assembly of 30S particles and may also be responsible for determining the conformation of the 16S rRNA at the A site. The protein is Small ribosomal subunit protein uS14 of Finegoldia magna (strain ATCC 29328 / DSM 20472 / WAL 2508) (Peptostreptococcus magnus).